A 524-amino-acid polypeptide reads, in one-letter code: Phenylalanine--tRNA ligase alpha subunit (524 aa).

L-phenylalanine contacts are provided by threonine 362, tyrosine 441, and phenylalanine 467.

This sequence belongs to the class-II aminoacyl-tRNA synthetase family. Phe-tRNA synthetase alpha subunit type 2 subfamily. In terms of assembly, tetramer of two alpha and two beta subunits. Mg(2+) serves as cofactor.

The protein localises to the cytoplasm. The enzyme catalyses tRNA(Phe) + L-phenylalanine + ATP = L-phenylalanyl-tRNA(Phe) + AMP + diphosphate + H(+). This is Phenylalanine--tRNA ligase alpha subunit from Methanopyrus kandleri (strain AV19 / DSM 6324 / JCM 9639 / NBRC 100938).